Here is a 245-residue protein sequence, read N- to C-terminus: 2,3-bisphosphoglycerate-dependent phosphoglycerate mutase (245 aa).

Substrate contacts are provided by residues 8-15 (RHGQSLWN), 21-22 (TG), arginine 60, 87-90 (ERHY), lysine 98, 114-115 (RR), and 183-184 (GN). Histidine 9 serves as the catalytic Tele-phosphohistidine intermediate. The Proton donor/acceptor role is filled by glutamate 87.

This sequence belongs to the phosphoglycerate mutase family. BPG-dependent PGAM subfamily.

The catalysed reaction is (2R)-2-phosphoglycerate = (2R)-3-phosphoglycerate. It participates in carbohydrate degradation; glycolysis; pyruvate from D-glyceraldehyde 3-phosphate: step 3/5. Its function is as follows. Catalyzes the interconversion of 2-phosphoglycerate and 3-phosphoglycerate. The protein is 2,3-bisphosphoglycerate-dependent phosphoglycerate mutase of Bacillus cereus (strain ATCC 14579 / DSM 31 / CCUG 7414 / JCM 2152 / NBRC 15305 / NCIMB 9373 / NCTC 2599 / NRRL B-3711).